Here is a 295-residue protein sequence, read N- to C-terminus: 4-hydroxy-tetrahydrodipicolinate synthase (295 aa).

Thr-46 serves as a coordination point for pyruvate. Catalysis depends on Tyr-135, which acts as the Proton donor/acceptor. The active-site Schiff-base intermediate with substrate is Lys-164. Pyruvate is bound at residue Ile-205.

It belongs to the DapA family. As to quaternary structure, homotetramer; dimer of dimers.

Its subcellular location is the cytoplasm. The catalysed reaction is L-aspartate 4-semialdehyde + pyruvate = (2S,4S)-4-hydroxy-2,3,4,5-tetrahydrodipicolinate + H2O + H(+). It participates in amino-acid biosynthesis; L-lysine biosynthesis via DAP pathway; (S)-tetrahydrodipicolinate from L-aspartate: step 3/4. Catalyzes the condensation of (S)-aspartate-beta-semialdehyde [(S)-ASA] and pyruvate to 4-hydroxy-tetrahydrodipicolinate (HTPA). This chain is 4-hydroxy-tetrahydrodipicolinate synthase, found in Aliarcobacter butzleri (strain RM4018) (Arcobacter butzleri).